The primary structure comprises 265 residues: Glutamate racemase (265 aa).

Residues 12–13 and 44–45 each bind substrate; these read DS and YG. Cys-75 acts as the Proton donor/acceptor in catalysis. Substrate is bound at residue 76-77; the sequence is NT. The active-site Proton donor/acceptor is Cys-186. 187-188 serves as a coordination point for substrate; it reads TH.

Belongs to the aspartate/glutamate racemases family.

The catalysed reaction is L-glutamate = D-glutamate. It participates in cell wall biogenesis; peptidoglycan biosynthesis. In terms of biological role, provides the (R)-glutamate required for cell wall biosynthesis. This chain is Glutamate racemase, found in Pseudomonas aeruginosa (strain ATCC 15692 / DSM 22644 / CIP 104116 / JCM 14847 / LMG 12228 / 1C / PRS 101 / PAO1).